The sequence spans 90 residues: Small ribosomal subunit protein uS15 (90 aa).

It belongs to the universal ribosomal protein uS15 family. As to quaternary structure, part of the 30S ribosomal subunit. Forms a bridge to the 50S subunit in the 70S ribosome, contacting the 23S rRNA.

In terms of biological role, one of the primary rRNA binding proteins, it binds directly to 16S rRNA where it helps nucleate assembly of the platform of the 30S subunit by binding and bridging several RNA helices of the 16S rRNA. Its function is as follows. Forms an intersubunit bridge (bridge B4) with the 23S rRNA of the 50S subunit in the ribosome. The sequence is that of Small ribosomal subunit protein uS15 from Wolbachia pipientis wMel.